We begin with the raw amino-acid sequence, 144 residues long: 3-hydroxyacyl-[acyl-carrier-protein] dehydratase FabZ (144 aa).

H48 is an active-site residue.

Belongs to the thioester dehydratase family. FabZ subfamily.

It localises to the cytoplasm. It carries out the reaction a (3R)-hydroxyacyl-[ACP] = a (2E)-enoyl-[ACP] + H2O. In terms of biological role, involved in unsaturated fatty acids biosynthesis. Catalyzes the dehydration of short chain beta-hydroxyacyl-ACPs and long chain saturated and unsaturated beta-hydroxyacyl-ACPs. In Bacillus cereus (strain AH187), this protein is 3-hydroxyacyl-[acyl-carrier-protein] dehydratase FabZ.